The chain runs to 381 residues: Cobalt-precorrin-5B C(1)-methyltransferase (381 aa).

Belongs to the CbiD family.

The enzyme catalyses Co-precorrin-5B + S-adenosyl-L-methionine = Co-precorrin-6A + S-adenosyl-L-homocysteine. It functions in the pathway cofactor biosynthesis; adenosylcobalamin biosynthesis; cob(II)yrinate a,c-diamide from sirohydrochlorin (anaerobic route): step 6/10. Its function is as follows. Catalyzes the methylation of C-1 in cobalt-precorrin-5B to form cobalt-precorrin-6A. The polypeptide is Cobalt-precorrin-5B C(1)-methyltransferase (Prochlorococcus marinus (strain SARG / CCMP1375 / SS120)).